Consider the following 101-residue polypeptide: Large ribosomal subunit protein bL21 (101 aa).

This sequence belongs to the bacterial ribosomal protein bL21 family. Part of the 50S ribosomal subunit. Contacts protein L20.

This protein binds to 23S rRNA in the presence of protein L20. This is Large ribosomal subunit protein bL21 from Thermus thermophilus (strain ATCC BAA-163 / DSM 7039 / HB27).